Here is a 484-residue protein sequence, read N- to C-terminus: MAEADIAVIGLAVMGQNLILNMNDHGFTVCAFNRTVKLVDDFLANEAKGTKIIGAHSIEEMCKKLKRPRRVMMLIKAGTPVDMMIDAIVPHLEEGDIIIDGGNSEYTDSNRRSEQLAAKGIMFVGCGVSGGEEGARFGPSLMPGGNPKAWPHLKDIFQKIAAKSNGEPCCDWVGNAGSGHFVKMVHNGIEYGDMQLIAEAYHLLSKAVELNHDQMAEVLDDWNKGELESFLIEITANILKYRDEQGEPIVPKIRDSAGQKGTGKWTCFAALEYGLPVTLIGEAVFARCLSALKDERVRASKQLPRPQVSPDTVVQDKRVFIKQISKALYASKIVSYAQGFMLLAEASKQFNWNLNFGAIALMWRGGCIIRSRFLGDIEHAFQKNKQLSNLLLDDFFTKAITEAQDSWRVVVCAAVRLGIPVPAFSSALAFYDGYTSEVVPANLLQAQRDYFGAHTYELLAKPGTWVHTNWTGTGGRVTSNAYNA.

Residues 10–15 (GLAVMG), 33–35 (NRT), 75–77 (IKA), and N103 contribute to the NADP(+) site. Substrate contacts are provided by residues N103 and 129 to 131 (SGG). K183 acts as the Proton acceptor in catalysis. Substrate is bound at residue 186–187 (HN). The active-site Proton donor is the E190. 5 residues coordinate substrate: Y191, K260, R287, R448, and H454.

This sequence belongs to the 6-phosphogluconate dehydrogenase family. In terms of assembly, homodimer.

It catalyses the reaction 6-phospho-D-gluconate + NADP(+) = D-ribulose 5-phosphate + CO2 + NADPH. It participates in carbohydrate degradation; pentose phosphate pathway; D-ribulose 5-phosphate from D-glucose 6-phosphate (oxidative stage): step 3/3. Its function is as follows. Catalyzes the oxidative decarboxylation of 6-phosphogluconate to ribulose 5-phosphate and CO(2), with concomitant reduction of NADP to NADPH. The chain is 6-phosphogluconate dehydrogenase, decarboxylating from Caenorhabditis elegans.